The primary structure comprises 782 residues: Cadherin-5 (782 aa).

A signal peptide spans 1-22; it reads MQVLVMLLAAAGTYLGLLTAPT. A propeptide spanning residues 23-44 is cleaved from the precursor; that stretch reads AASNPGRQDTPSTLPLHRRQKR. 5 Cadherin domains span residues 45–148, 149–255, 256–370, 371–475, and 476–592; these read DWIW…WPVF, TQLV…FPVF, TQTR…PPNF, KQPF…DNAP, and EFAK…MGAQ. Residues 45-598 lie on the Extracellular side of the membrane; sequence DWIWNQMHID…MGAQVGVSIQ (554 aa). Residues Glu55 and Glu56 each contribute to the Ca(2+) site. N-linked (GlcNAc...) asparagine glycosylation occurs at Asn58. Residues Asp106, Glu108, Asp140, Ile141, Asn142, Asp143, and Asn144 each coordinate Ca(2+). N-linked (GlcNAc...) asparagine glycosylation is present at Asn154. Positions 174, 176, 183, and 228 each coordinate Ca(2+). 4 N-linked (GlcNAc...) asparagine glycosylation sites follow: Asn360, Asn440, Asn522, and Asn534. Residues 599–619 traverse the membrane as a helical segment; that stretch reads ALVAIFLCILTIAVISLLVYL. The interval 620–659 is required for interaction with PALS1; it reads RRRLRKQARAHGKSVPEIHEQLVTYDEEGGGEMDTTSYDV. Topologically, residues 620-782 are cytoplasmic; the sequence is RRRLRKQARA…GSDPREELLY (163 aa).

As to quaternary structure, part of a complex composed of AMOTL2, MAGI1 and CDH5, within the complex AMOTL2 acts as a scaffold protein for the interaction of MAGI1 with CDH5. The complex is required for coupling actin fibers to cell junctions in endothelial cells. Within the complex AMOTL2 (via its N-terminus) interacts with CDH5. Interacts (via cadherin 5 domain) with PTPRB. Interacts with TRPC4. Interacts with KRIT1. Interacts with PARD3. Interacts with RTN4 (isoform B). Interacts with PALS1; the interaction promotes PALS1 localization to cell junctions and is required for CDH5-mediated vascular lumen formation and endothelial cell. Interacts with CTNND1/p120-catenin; the interaction controls CADH5 endocytosis. In terms of processing, phosphorylated on tyrosine residues by KDR/VEGFR-2. Dephosphorylated by PTPRB. O-glycosylated.

The protein localises to the cell junction. It localises to the adherens junction. It is found in the cell membrane. Its subcellular location is the cytoplasm. Functionally, cadherins are calcium-dependent cell adhesion proteins. They preferentially interact with themselves in a homophilic manner in connecting cells; cadherins may thus contribute to the sorting of heterogeneous cell types. This cadherin may play a important role in endothelial cell biology through control of the cohesion and organization of the intercellular junctions. It associates with alpha-catenin forming a link to the cytoskeleton. Plays a role in coupling actin fibers to cell junctions in endothelial cells, via acting as a cell junctional complex anchor for AMOTL2 and MAGI1. Acts in concert with KRIT1 and PALS1 to establish and maintain correct endothelial cell polarity and vascular lumen. These effects are mediated by recruitment and activation of the Par polarity complex and RAP1B. Required for activation of PRKCZ and for localization of phosphorylated PRKCZ, PARD3, TIAM1 and RAP1B to the cell junction. Associates with CTNND1/p120-catenin to control CADH5 endocytosis. The sequence is that of Cadherin-5 from Sus scrofa (Pig).